We begin with the raw amino-acid sequence, 368 residues long: Cytochrome-c peroxidase IdrP2 (368 aa).

The N-terminal stretch at 1–27 (MKWHRGRLTQTLGAMGLTATLTVAAQA) is a signal peptide. 2 consecutive Cytochrome c domains span residues 48–158 (AMIE…ALWQ) and 201–346 (KEAQ…LTLS). 6 residues coordinate heme c: cysteine 70, cysteine 73, histidine 74, cysteine 216, cysteine 219, and histidine 220.

In terms of assembly, the iodate reductase (Idr) complex is composed of a molybdopterin-dependent iodate reductase (IdrA and IdrB subunits) and two associated peroxidases (IdrP1 and IdrP2). The cofactor is heme c.

The protein resides in the periplasm. The catalysed reaction is 2 Fe(II)-[cytochrome c] + H2O2 + 2 H(+) = 2 Fe(III)-[cytochrome c] + 2 H2O. Functionally, involved in iodate respiration. Probably reduces the H(2)O(2) produced by IdrA/IdrB to H(2)O, using a reduced cytochrome c as the electron donor. In Pseudomonas sp. (strain SCT), this protein is Cytochrome-c peroxidase IdrP2.